Consider the following 64-residue polypeptide: Small ribosomal subunit protein bS18c (64 aa).

The protein belongs to the bacterial ribosomal protein bS18 family. As to quaternary structure, part of the 30S ribosomal subunit.

It is found in the plastid. The protein localises to the chloroplast. The sequence is that of Small ribosomal subunit protein bS18c (rps18) from Bigelowiella natans (Pedinomonas minutissima).